Reading from the N-terminus, the 524-residue chain is 56 kDa type-specific antigen (524 aa).

The N-terminal stretch at 1–22 (MKKIMLIASAMSALSLPFSASA) is a signal peptide. A helical membrane pass occupies residues 67-87 (LTTGLPFGGTLAAGMTIAPGF). 2 disordered regions span residues 112–132 (SKGE…RKRF) and 387–422 (EKLA…KGKE). Composition is skewed to basic and acidic residues over residues 395–405 (EDAKNQGEGDC) and 413–422 (EKSKEGKGKE). A helical membrane pass occupies residues 472–492 (TGMVASGALGVAINAAEGVYV).

It is found in the cell membrane. Its function is as follows. May be an adherent factor for rickettsial adsorption to the host-cell surface and a determinant of virulence of individual rickettsial strain. It is the major outer membrane protein. The protein is 56 kDa type-specific antigen of Orientia tsutsugamushi (Rickettsia tsutsugamushi).